The chain runs to 184 residues: Peptide deformylase 2 (184 aa).

Positions 110 and 153 each coordinate Fe cation. Residue glutamate 154 is part of the active site. Histidine 157 contacts Fe cation.

It belongs to the polypeptide deformylase family. It depends on Fe(2+) as a cofactor.

The enzyme catalyses N-terminal N-formyl-L-methionyl-[peptide] + H2O = N-terminal L-methionyl-[peptide] + formate. Removes the formyl group from the N-terminal Met of newly synthesized proteins. Requires at least a dipeptide for an efficient rate of reaction. N-terminal L-methionine is a prerequisite for activity but the enzyme has broad specificity at other positions. This Bacillus subtilis (strain 168) protein is Peptide deformylase 2 (defB).